Reading from the N-terminus, the 111-residue chain is Probable 4-amino-4-deoxy-L-arabinose-phosphoundecaprenol flippase subunit ArnE (111 aa).

Transmembrane regions (helical) follow at residues Leu38–Leu58, Leu61–Ala81, and Val89–Ser109. The region spanning Leu40–Ser109 is the EamA domain.

It belongs to the ArnE family. In terms of assembly, heterodimer of ArnE and ArnF.

It localises to the cell inner membrane. It participates in bacterial outer membrane biogenesis; lipopolysaccharide biosynthesis. Functionally, translocates 4-amino-4-deoxy-L-arabinose-phosphoundecaprenol (alpha-L-Ara4N-phosphoundecaprenol) from the cytoplasmic to the periplasmic side of the inner membrane. In Salmonella paratyphi A (strain ATCC 9150 / SARB42), this protein is Probable 4-amino-4-deoxy-L-arabinose-phosphoundecaprenol flippase subunit ArnE.